The chain runs to 312 residues: 4-hydroxyproline 2-epimerase (312 aa).

The active-site Proton acceptor is the Cys-88. Residues 89-90 (GH), His-208, and Asp-234 each bind substrate. Catalysis depends on Cys-238, which acts as the Proton donor. Substrate is bound at residue 239–240 (GT).

This sequence belongs to the proline racemase family.

The catalysed reaction is trans-4-hydroxy-L-proline = cis-4-hydroxy-D-proline. Functionally, catalyzes the epimerization of trans-4-hydroxy-L-proline (t4LHyp) to cis-4-hydroxy-D-proline (c4DHyp). Is likely involved in a degradation pathway that converts t4LHyp to alpha-ketoglutarate. Can also catalyze the epimerization of trans-3-hydroxy-L-proline (t3LHyp) to cis-3-hydroxy-D-proline (c3DHyp), albeit with 500-fold lower efficiency. Displays no proline racemase activity. The sequence is that of 4-hydroxyproline 2-epimerase from Xanthomonas campestris pv. campestris (strain ATCC 33913 / DSM 3586 / NCPPB 528 / LMG 568 / P 25).